Consider the following 434-residue polypeptide: Histidinol dehydrogenase (434 aa).

NAD(+)-binding residues include Y130, Q191, and N214. Substrate is bound by residues S237, Q259, and H262. Q259 and H262 together coordinate Zn(2+). Active-site proton acceptor residues include E327 and H328. Substrate-binding residues include H328, D361, E415, and H420. D361 is a Zn(2+) binding site. Zn(2+) is bound at residue H420.

The protein belongs to the histidinol dehydrogenase family. Requires Zn(2+) as cofactor.

It carries out the reaction L-histidinol + 2 NAD(+) + H2O = L-histidine + 2 NADH + 3 H(+). Its pathway is amino-acid biosynthesis; L-histidine biosynthesis; L-histidine from 5-phospho-alpha-D-ribose 1-diphosphate: step 9/9. In terms of biological role, catalyzes the sequential NAD-dependent oxidations of L-histidinol to L-histidinaldehyde and then to L-histidine. This chain is Histidinol dehydrogenase, found in Rhizobium meliloti (strain 1021) (Ensifer meliloti).